We begin with the raw amino-acid sequence, 504 residues long: Cytochrome P450 6B6 (504 aa).

Cys-445 provides a ligand contact to heme.

This sequence belongs to the cytochrome P450 family. Heme is required as a cofactor.

It localises to the endoplasmic reticulum membrane. It is found in the microsome membrane. The enzyme catalyses an organic molecule + reduced [NADPH--hemoprotein reductase] + O2 = an alcohol + oxidized [NADPH--hemoprotein reductase] + H2O + H(+). The chain is Cytochrome P450 6B6 (CYP6B6) from Helicoverpa armigera (Cotton bollworm).